Reading from the N-terminus, the 20-residue chain is EQSAGFREYIDFFDGYSLTY.

It localises to the plastid. The protein localises to the chloroplast thylakoid lumen. The polypeptide is Thylakoid lumenal 22 kDa protein (Spinacia oleracea (Spinach)).